A 310-amino-acid polypeptide reads, in one-letter code: Vomeronasal type-1 receptor 93 (310 aa).

Residues 1–20 (MNKDNTLHVDTIMKITMFSE) are Extracellular-facing. Residues 21-41 (VSVGILANSILFFAHLCMLLG) traverse the membrane as a helical segment. At 42 to 59 (ENKPKPIHLYIASLSLTQ) the chain is on the cytoplasmic side. Residues 60–80 (LMLLITMGLIAADMFISQGIW) form a helical membrane-spanning segment. The Extracellular portion of the chain corresponds to 81 to 93 (DSTSCQSLIYLHR). Cysteine 85 and cysteine 172 are joined by a disulfide. Residues 94–114 (LSRGFTLSAACLLNVFWMITL) form a helical membrane-spanning segment. The Cytoplasmic portion of the chain corresponds to 115–134 (SSKKSRLTKFKHNSPHHISG). Residues 135 to 155 (AFLLLCVLYMCFSSHLILSII) form a helical membrane-spanning segment. The Extracellular segment spans residues 156 to 193 (ATPNLTSDNFMYVTKSCSFLPMCYSRTSMFSTTIAVRE). Asparagine 159 is a glycosylation site (N-linked (GlcNAc...) asparagine). A helical membrane pass occupies residues 194-214 (AFFIGLMALSSGYLVAFLWRH). Residues 215–238 (RKQAQHLHSTGLSSKASPEQRATE) lie on the Cytoplasmic side of the membrane. Residues 239 to 259 (TILLLMSFFVVLYILENVVFY) form a helical membrane-spanning segment. At 260–269 (SRMKFKDGST) the chain is on the extracellular side. The helical transmembrane segment at 270 to 290 (FYCVQIIVSHSYATVSSFVFI) threads the bilayer. The Cytoplasmic segment spans residues 291–310 (FTEKRMTKILRSVCTRIINI).

It belongs to the G-protein coupled receptor 1 family. Expressed in 1-4% of neurons of the vomeronasal organ. Only one pheromone receptor gene may be expressed in a particular neuron. Not expressed in the main olfactory epithelium.

It is found in the cell membrane. Functionally, putative pheromone receptor implicated in the regulation of social as well as reproductive behavior. This Rattus norvegicus (Rat) protein is Vomeronasal type-1 receptor 93 (Vom1r93).